Reading from the N-terminus, the 119-residue chain is Large ribosomal subunit protein bL20 (119 aa).

Belongs to the bacterial ribosomal protein bL20 family.

Functionally, binds directly to 23S ribosomal RNA and is necessary for the in vitro assembly process of the 50S ribosomal subunit. It is not involved in the protein synthesizing functions of that subunit. The protein is Large ribosomal subunit protein bL20 of Clostridium kluyveri (strain NBRC 12016).